Reading from the N-terminus, the 462-residue chain is Receptor like protein 29 (462 aa).

An N-terminal signal peptide occupies residues 1–26; it reads MTMKRALPSPSSLLFFFLLITPLFLC. The Extracellular portion of the chain corresponds to 27–441; it reads QENRVSASMP…SQASRYYRSC (415 aa). N139 carries an N-linked (GlcNAc...) asparagine glycan. LRR repeat units lie at residues 139-164, 165-188, 190-212, 213-236, 238-260, 261-284, 286-308, 309-331, 332-355, and 357-381; these read NSSLQQLSLRSNPSLSGQIPPRISSL, KSLQILTLSQNRLTGDIPPAIFSL, SLVHLDLSYNKLTGKIPLQLGNL, NNLVGLDLSYNSLTGTIPPTISQL, MLQKLDLSSNSLFGRIPEGVEKL, RSLSFMALSNNKLKGAFPKGISNL, SLQYFIMDNNPMFVALPVELGFL, PKLQELQLENSGYSGVIPESYTK, LTNLSSLSLANNRLTGEIPSGFES, and PHVFHLNLSRNLLIGVVPFDSSFLR. Residues N334, N363, and N416 are each glycosylated (N-linked (GlcNAc...) asparagine). The chain crosses the membrane as a helical span at residues 442 to 462; sequence FFANALFPFALFLGLHQRWVL.

This sequence belongs to the RLP family.

Its subcellular location is the cell membrane. The protein is Receptor like protein 29 of Arabidopsis thaliana (Mouse-ear cress).